The following is a 269-amino-acid chain: tRNA pseudouridine synthase A (269 aa).

D51 acts as the Nucleophile in catalysis. Residue Y109 coordinates substrate.

Belongs to the tRNA pseudouridine synthase TruA family. Homodimer.

The enzyme catalyses uridine(38/39/40) in tRNA = pseudouridine(38/39/40) in tRNA. Functionally, formation of pseudouridine at positions 38, 39 and 40 in the anticodon stem and loop of transfer RNAs. This is tRNA pseudouridine synthase A from Histophilus somni (strain 2336) (Haemophilus somnus).